The sequence spans 273 residues: tRNA pseudouridine synthase B (273 aa).

The Nucleophile role is filled by Asp38.

It belongs to the pseudouridine synthase TruB family. Type 1 subfamily.

The catalysed reaction is uridine(55) in tRNA = pseudouridine(55) in tRNA. Functionally, responsible for synthesis of pseudouridine from uracil-55 in the psi GC loop of transfer RNAs. In Campylobacter concisus (strain 13826), this protein is tRNA pseudouridine synthase B.